A 180-amino-acid chain; its full sequence is Oligoribonuclease (180 aa).

The Exonuclease domain occupies 7 to 170 (LIWIDLEMTG…DDIRDSINEL (164 aa)). Tyrosine 128 is an active-site residue.

The protein belongs to the oligoribonuclease family.

The protein localises to the cytoplasm. 3'-to-5' exoribonuclease specific for small oligoribonucleotides. This chain is Oligoribonuclease, found in Marinobacter nauticus (strain ATCC 700491 / DSM 11845 / VT8) (Marinobacter aquaeolei).